A 157-amino-acid chain; its full sequence is 3-dehydroquinate dehydratase (157 aa).

Tyr-24 functions as the Proton acceptor in the catalytic mechanism. Residues Asn-75, His-81, and Asp-88 each coordinate substrate. Catalysis depends on His-101, which acts as the Proton donor. Residues 102–103 (LS) and Arg-112 contribute to the substrate site.

Belongs to the type-II 3-dehydroquinase family. Homododecamer.

The enzyme catalyses 3-dehydroquinate = 3-dehydroshikimate + H2O. Its pathway is metabolic intermediate biosynthesis; chorismate biosynthesis; chorismate from D-erythrose 4-phosphate and phosphoenolpyruvate: step 3/7. Its function is as follows. Catalyzes a trans-dehydration via an enolate intermediate. In Brucella canis (strain ATCC 23365 / NCTC 10854 / RM-666), this protein is 3-dehydroquinate dehydratase.